The chain runs to 356 residues: MIRISIDVMGGDYGPEATIAGAARVTEYLPNIYFLFYGLEETVKPVLKKYPCLASISCFCPTESYTRMDEKPSQALRNGRGKSSMWHAIEAVKNGEADVCISAGNTGALMAMSYFCLKMMAEAERPGIAGIWPTLRSESIVLDIGATIGASANQLVDFAVMGAGMFRALYHTEKPSVGLLNVGVEEVKGLYAIKKAGMILREVQLEGLEYKGFVEGNDIGKGTVDVVVTEGFSGNIALKTAEGTARQIGEILNSAMRSSFFSSLGYFLSRGAFRTLKHKMDPDRVNGGVLLGLNGIVIKSHGSANADGFASAIRIGYTMVHNGLLKKITADLRRFHQNKQTLFYKEDKATENEKII.

Belongs to the PlsX family. Homodimer. Probably interacts with PlsY.

The protein localises to the cytoplasm. The catalysed reaction is a fatty acyl-[ACP] + phosphate = an acyl phosphate + holo-[ACP]. Its pathway is lipid metabolism; phospholipid metabolism. Functionally, catalyzes the reversible formation of acyl-phosphate (acyl-PO(4)) from acyl-[acyl-carrier-protein] (acyl-ACP). This enzyme utilizes acyl-ACP as fatty acyl donor, but not acyl-CoA. In Bartonella henselae (strain ATCC 49882 / DSM 28221 / CCUG 30454 / Houston 1) (Rochalimaea henselae), this protein is Phosphate acyltransferase.